A 498-amino-acid chain; its full sequence is ATP synthase subunit beta, chloroplastic (498 aa).

An ATP-binding site is contributed by 172 to 179 (GGAGVGKT).

It belongs to the ATPase alpha/beta chains family. In terms of assembly, F-type ATPases have 2 components, CF(1) - the catalytic core - and CF(0) - the membrane proton channel. CF(1) has five subunits: alpha(3), beta(3), gamma(1), delta(1), epsilon(1). CF(0) has four main subunits: a(1), b(1), b'(1) and c(9-12).

The protein resides in the plastid. Its subcellular location is the chloroplast thylakoid membrane. The enzyme catalyses ATP + H2O + 4 H(+)(in) = ADP + phosphate + 5 H(+)(out). Its function is as follows. Produces ATP from ADP in the presence of a proton gradient across the membrane. The catalytic sites are hosted primarily by the beta subunits. In Phaseolus vulgaris (Kidney bean), this protein is ATP synthase subunit beta, chloroplastic.